We begin with the raw amino-acid sequence, 461 residues long: Integrator complex subunit 12 (461 aa).

The interval 42–131 is disordered; it reads GIDSSYRPTQ…PETRSSPITV (90 aa). Residue Lys-68 forms a Glycyl lysine isopeptide (Lys-Gly) (interchain with G-Cter in SUMO2) linkage. Residues 88 to 124 are compositionally biased toward basic and acidic residues; that stretch reads TAEKIKKEAEKRPADKMKDVTEGIDVPKKPRLEKPET. At Ser-127 the chain carries Phosphoserine. The PHD-type zinc finger occupies 158-214; the sequence is GLACVVCRQMTVASGNQLVECQECHNLYHQDCHKPQVTDKEVNDPRLVWYCARCTRQ. Lys-253 is covalently cross-linked (Glycyl lysine isopeptide (Lys-Gly) (interchain with G-Cter in SUMO2)). Over residues 302 to 328 the composition is skewed to polar residues; it reads AGPSTAKLNSAAQNSSGKPAASSSNQK. The segment at 302 to 443 is disordered; that stretch reads AGPSTAKLNS…PTSQESQLNA (142 aa). Low complexity-rich tracts occupy residues 348-357 and 381-436; these read GSGNSTSPSV and VSKV…GPTS.

Belongs to the Integrator subunit 12 family. As to quaternary structure, component of the Integrator complex, composed of core subunits INTS1, INTS2, INTS3, INTS4, INTS5, INTS6, INTS7, INTS8, INTS9/RC74, INTS10, INTS11/CPSF3L, INTS12, INTS13, INTS14 and INTS15. The core complex associates with protein phosphatase 2A subunits PPP2CA and PPP2R1A, to form the Integrator-PP2A (INTAC) complex. In terms of processing, dephosphorylated at Ser-127 by the PNUTS-PP1 complex, promoting RNA polymerase II transcription pause-release.

The protein resides in the nucleus. Functionally, component of the integrator complex, a multiprotein complex that terminates RNA polymerase II (Pol II) transcription in the promoter-proximal region of genes. The integrator complex provides a quality checkpoint during transcription elongation by driving premature transcription termination of transcripts that are unfavorably configured for transcriptional elongation: the complex terminates transcription by (1) catalyzing dephosphorylation of the C-terminal domain (CTD) of Pol II subunit POLR2A/RPB1 and SUPT5H/SPT5, (2) degrading the exiting nascent RNA transcript via endonuclease activity and (3) promoting the release of Pol II from bound DNA. The integrator complex is also involved in terminating the synthesis of non-coding Pol II transcripts, such as enhancer RNAs (eRNAs), small nuclear RNAs (snRNAs), telomerase RNAs and long non-coding RNAs (lncRNAs). Mediates recruitment of cytoplasmic dynein to the nuclear envelope, probably as component of the integrator complex. The chain is Integrator complex subunit 12 (Ints12) from Mus musculus (Mouse).